Consider the following 487-residue polypeptide: 3-octaprenyl-4-hydroxybenzoate carboxy-lyase (487 aa).

Residue asparagine 172 coordinates Mn(2+). Residues 175-177 (IYR), 189-191 (RWL), and 194-195 (RG) each bind prenylated FMN. Residue glutamate 238 coordinates Mn(2+). The active-site Proton donor is the aspartate 287.

The protein belongs to the UbiD family. As to quaternary structure, homohexamer. Prenylated FMN is required as a cofactor. It depends on Mn(2+) as a cofactor.

The protein resides in the cell membrane. It catalyses the reaction a 4-hydroxy-3-(all-trans-polyprenyl)benzoate + H(+) = a 2-(all-trans-polyprenyl)phenol + CO2. It participates in cofactor biosynthesis; ubiquinone biosynthesis. Catalyzes the decarboxylation of 3-octaprenyl-4-hydroxy benzoate to 2-octaprenylphenol, an intermediate step in ubiquinone biosynthesis. The chain is 3-octaprenyl-4-hydroxybenzoate carboxy-lyase from Nitrosomonas eutropha (strain DSM 101675 / C91 / Nm57).